A 340-amino-acid polypeptide reads, in one-letter code: S-adenosylmethionine:tRNA ribosyltransferase-isomerase (340 aa).

This sequence belongs to the QueA family. As to quaternary structure, monomer.

The protein localises to the cytoplasm. The catalysed reaction is 7-aminomethyl-7-carbaguanosine(34) in tRNA + S-adenosyl-L-methionine = epoxyqueuosine(34) in tRNA + adenine + L-methionine + 2 H(+). It functions in the pathway tRNA modification; tRNA-queuosine biosynthesis. In terms of biological role, transfers and isomerizes the ribose moiety from AdoMet to the 7-aminomethyl group of 7-deazaguanine (preQ1-tRNA) to give epoxyqueuosine (oQ-tRNA). The protein is S-adenosylmethionine:tRNA ribosyltransferase-isomerase of Francisella tularensis subsp. tularensis (strain FSC 198).